We begin with the raw amino-acid sequence, 122 residues long: Non-specific lipid-transfer protein (122 aa).

The first 19 residues, 1–19 (MGVSRACFVVMVVVYMVVA), serve as a signal peptide directing secretion. Residues 20 to 29 (ATPNVKLAEA) constitute a propeptide that is removed on maturation. Disulfide bonds link C32–C81, C42–C58, C59–C104, and C79–C118.

Monomer.

Plant non-specific lipid-transfer proteins transfer phospholipids as well as galactolipids across membranes. May play a role in wax or cutin deposition in the cell walls of expanding epidermal cells and certain secretory tissues. Binds saturated fatty acids, unsaturated fatty acids, lysolipids and, with highest efficiency, jasmonic acid. Has weak antimicrobial activity against fungi. Inhibits spore germination and hyphae elongation in A.niger VKM F-2259 and N.crassa VKM F-184. Has no antibacterial activity against A.tumefaciens A281, C.michiganensis VKM Ac-144 and P.syringae VKM B-1546. This Anethum graveolens (Dill) protein is Non-specific lipid-transfer protein.